A 112-amino-acid chain; its full sequence is DNA-binding protein Mboo_1886 (112 aa).

It belongs to the PDCD5 family.

This Methanoregula boonei (strain DSM 21154 / JCM 14090 / 6A8) protein is DNA-binding protein Mboo_1886.